A 361-amino-acid polypeptide reads, in one-letter code: tRNA/tmRNA (uracil-C(5))-methyltransferase (361 aa).

Residues Q183, Y211, N216, E232, and D294 each coordinate S-adenosyl-L-methionine. C319 functions as the Nucleophile in the catalytic mechanism. The active-site Proton acceptor is E353.

This sequence belongs to the class I-like SAM-binding methyltransferase superfamily. RNA M5U methyltransferase family. TrmA subfamily.

The catalysed reaction is uridine(54) in tRNA + S-adenosyl-L-methionine = 5-methyluridine(54) in tRNA + S-adenosyl-L-homocysteine + H(+). The enzyme catalyses uridine(341) in tmRNA + S-adenosyl-L-methionine = 5-methyluridine(341) in tmRNA + S-adenosyl-L-homocysteine + H(+). Functionally, dual-specificity methyltransferase that catalyzes the formation of 5-methyluridine at position 54 (m5U54) in all tRNAs, and that of position 341 (m5U341) in tmRNA (transfer-mRNA). This is tRNA/tmRNA (uracil-C(5))-methyltransferase from Acinetobacter baumannii (strain AYE).